Consider the following 33-residue polypeptide: Photosystem II reaction center protein Psb30 (33 aa).

A helical membrane pass occupies residues 5-25; it reads ILSQLIAIAVTLFLGPVVVIL.

This sequence belongs to the Psb30/Ycf12 family. PSII is composed of 1 copy each of membrane proteins PsbA, PsbB, PsbC, PsbD, PsbE, PsbF, PsbH, PsbI, PsbJ, PsbK, PsbL, PsbM, PsbT, PsbX, PsbY, PsbZ, Psb30/Ycf12, peripheral proteins of the oxygen-evolving complex and a large number of cofactors. It forms dimeric complexes.

The protein resides in the plastid. Its subcellular location is the chloroplast thylakoid membrane. Its function is as follows. A core subunit of photosystem II (PSII), probably helps stabilize the reaction center. The polypeptide is Photosystem II reaction center protein Psb30 (Oedogonium cardiacum (Filamentous green alga)).